Here is a 388-residue protein sequence, read N- to C-terminus: Fibrinogen- and Ig-binding protein (388 aa).

Positions Met-1 to Ala-41 are cleaved as a signal peptide. 4 D repeats span residues Glu-288–Glu-293, Ala-294–Glu-299, Ala-302–Glu-307, and Ala-309–Asp-314. The tract at residues Leu-308 to Thr-362 is disordered. The segment covering Pro-322–Pro-332 has biased composition (basic and acidic residues). Polar residues predominate over residues Arg-334–Thr-362. The LPXTG sorting signal signature appears at Leu-354–Gly-358. At Thr-357 the chain carries Pentaglycyl murein peptidoglycan amidated threonine. The propeptide at Gly-358–Asn-388 is removed by sortase.

The protein localises to the secreted. It is found in the cell wall. Binds IgG molecules of the Ig1, Ig2 and Ig4 subclasses, and also binds fibrinogen. This chain is Fibrinogen- and Ig-binding protein (mrp4), found in Streptococcus pyogenes.